The following is a 304-amino-acid chain: Negative regulator of the PHO system (304 aa).

In terms of domain architecture, Protein kinase spans 7–297 (FKQLEKVGNG…AKDALNHPWF (291 aa)). ATP contacts are provided by residues 13-21 (VGNGTYATV) and lysine 36. The active-site Proton acceptor is aspartate 133.

Belongs to the protein kinase superfamily. CMGC Ser/Thr protein kinase family. CDC2/CDKX subfamily. Interacts with a number of cyclins.

It catalyses the reaction L-seryl-[protein] + ATP = O-phospho-L-seryl-[protein] + ADP + H(+). The enzyme catalyses L-threonyl-[protein] + ATP = O-phospho-L-threonyl-[protein] + ADP + H(+). Its function is as follows. When phosphate concentrations are high it phosphorylates the PHO4 transcription factor thus establishing repression. This chain is Negative regulator of the PHO system (PHO85), found in Kluyveromyces lactis (strain ATCC 8585 / CBS 2359 / DSM 70799 / NBRC 1267 / NRRL Y-1140 / WM37) (Yeast).